The primary structure comprises 415 residues: Phosphoribosylamine--glycine ligase (415 aa).

In terms of domain architecture, ATP-grasp spans 108–311 (KKIMEKYNIP…LMQHIIDLDE (204 aa)). 134-191 (IENCEFPVVVKKDGLAAGKGVIIADTIEAARSAIEIMYGDEEEGTVVFETFLEGEEFS) contacts ATP. Mg(2+) is bound by residues glutamate 281 and asparagine 283.

This sequence belongs to the GARS family. Requires Mg(2+) as cofactor. Mn(2+) serves as cofactor.

The catalysed reaction is 5-phospho-beta-D-ribosylamine + glycine + ATP = N(1)-(5-phospho-beta-D-ribosyl)glycinamide + ADP + phosphate + H(+). The protein operates within purine metabolism; IMP biosynthesis via de novo pathway; N(1)-(5-phospho-D-ribosyl)glycinamide from 5-phospho-alpha-D-ribose 1-diphosphate: step 2/2. The sequence is that of Phosphoribosylamine--glycine ligase from Staphylococcus aureus (strain MRSA252).